Consider the following 477-residue polypeptide: (R)-2-hydroxyglutaryl-CoA dehydratase, subunit alpha (477 aa).

This sequence belongs to the FldB/FldC dehydratase alpha/beta subunit family. As to quaternary structure, the (R)-2-hydroxyglutaryl-CoA dehydratase enzyme system is a heterodimer composed of an alpha subunit (HgdA) and a beta subunit (HgdB). [4Fe-4S] cluster serves as cofactor. The cofactor is FMN. It depends on Mg(2+) as a cofactor.

The protein localises to the cytoplasm. It carries out the reaction (R)-2-hydroxyglutaryl-CoA = (2E)-glutaconyl-CoA + H2O. It functions in the pathway amino-acid degradation; L-glutamate degradation via hydroxyglutarate pathway; crotonoyl-CoA from L-glutamate: step 4/5. With respect to regulation, activated by the HgdC. Reversibly inactivated by oxidants such as 2-nitrophenol, 3-nitrophenol, 4-nitrophenol, 4-nitrobenzoate, carbonyl cyanide 4-(trifluoromethoxy)phenylhydrazone (FCCP) and chloramphenicol. Irreversibly inactivated by oxidants such as hydroxylamine and nitrite. In terms of biological role, involved in the fermentation of L-glutamate via the hydroxyglutarate pathway. Catalyzes the reversible syn-elimination of water from (R)-2-hydroxyglutaryl-CoA to yield (E)-glutaconyl-CoA. The dehydration mechanism involves a transient one electron reduction of the thioester from (R)-2-hydroxyglutaryl-CoA, generating a ketyl radical. Prior to (E)-glutaconyl-CoA formation, the ketyl radical is subsequently reoxidized by electron transfer back to the HgdA-HgdB complex (CompD) to avoid change in oxidation state of the substrate. The appropriate redox state of dehydratase HgdA-HgdB complex (CompD) is maintained by HgdC (CompA) via hydrolysis of ATP and ATP-dependent electron transfer. Since the electron is recycled, the dehydratase is able to perform several turnovers with only catalytic amounts of ATP and substoichiometric amounts of HgdC (CompA). The protein is (R)-2-hydroxyglutaryl-CoA dehydratase, subunit alpha of Acidaminococcus fermentans (strain ATCC 25085 / DSM 20731 / CCUG 9996 / CIP 106432 / VR4).